A 29-amino-acid chain; its full sequence is Trypsin inhibitor 1 (29 aa).

3 cysteine pairs are disulfide-bonded: Cys-3/Cys-20, Cys-10/Cys-22, and Cys-16/Cys-28.

The protein belongs to the protease inhibitor I7 (squash-type serine protease inhibitor) family.

Its subcellular location is the secreted. Functionally, inhibits trypsin. The protein is Trypsin inhibitor 1 of Luffa aegyptiaca (Sponge gourd).